The following is a 3674-amino-acid chain: Spectrin beta chain, non-erythrocytic 5 (3674 aa).

The disordered stretch occupies residues 1–37; the sequence is MAGQPHSPRELLGAAGHRSRRPSTELRVPPSPSLTMD. The segment at 1–279 is actin-binding; it reads MAGQPHSPRE…IMTYVSLYYH (279 aa). Calponin-homology (CH) domains lie at 54 to 159 and 177 to 282; these read QMQE…LRFQ and LSTK…HYCS. 8 Spectrin repeats span residues 307–416, 428–529, 642–742, 747–810, 900–996, 1103–1206, 1209–1311, and 1315–1417; these read LQTQ…ALQQ, ARRF…RKQV, AEFL…ARLQ, VLQY…QGRA, GFCS…AVQL, ARQS…WLQE, ELQK…RQLL, and QLQE…ELQQ. The disordered stretch occupies residues 1441–1469; it reads ALQSSETGQDLRSSQRLQKRHQQLESESR. Positions 1442–1456 are enriched in polar residues; the sequence is LQSSETGQDLRSSQR. 19 Spectrin repeats span residues 1521–1624, 1628–1727, 1731–1835, 1842–1940, 1944–2046, 2052–2146, 2150–2253, 2256–2361, 2366–2467, 2471–2574, 2577–2680, 2683–2784, 2791–2890, 2894–2997, 3000–3103, 3106–3209, 3213–3311, 3318–3415, and 3422–3488; these read ELHQ…CLQQ, FQQY…RELE, RLHE…ALRD, VHRD…AQLE, LLAR…ERLQ, QLFL…HALH, LMAS…ELED, NFLE…QQLE, IHVL…EALD, QAQK…QLQQ, ELQL…RLEE, QLQA…AKLQ, RLRR…TALE, LLLK…LLQQ, EAQQ…GLQE, QLHQ…ENLA, EVHS…QWLA, AFLG…RWQR, and LQKL…EQEL. A PH domain is found at 3533–3641; it reads TPTMEGSLEF…WWRALGSTAA (109 aa).

Belongs to the spectrin family. Probably associates with an alpha chain. Interacts (via C-terminus) with TRPC4. As to expression, expressed at very low levels in many tissues, with strongest expression in cerebellum, spinal cord, stomach, pituitary gland, liver, pancreas, salivary gland, kidney, bladder, and heart.

It localises to the cytoplasm. The protein localises to the cytoskeleton. This is Spectrin beta chain, non-erythrocytic 5 (SPTBN5) from Homo sapiens (Human).